A 171-amino-acid chain; its full sequence is Adenine phosphoribosyltransferase (171 aa).

It belongs to the purine/pyrimidine phosphoribosyltransferase family. In terms of assembly, homodimer.

It localises to the cytoplasm. The enzyme catalyses AMP + diphosphate = 5-phospho-alpha-D-ribose 1-diphosphate + adenine. It participates in purine metabolism; AMP biosynthesis via salvage pathway; AMP from adenine: step 1/1. Its function is as follows. Catalyzes a salvage reaction resulting in the formation of AMP, that is energically less costly than de novo synthesis. This Solidesulfovibrio magneticus (strain ATCC 700980 / DSM 13731 / RS-1) (Desulfovibrio magneticus) protein is Adenine phosphoribosyltransferase.